Consider the following 338-residue polypeptide: MQIRDAIITVTNRTDLSQDDAAAVMEQMMNGEATPAQIAALLTALHFKGETDAEIAGMAQVMRAKSLAVPHDGGVVDTCGTGGDHSNTFNISTTAAFVAAGAGATVAKHGNRAMSSKCGSADVLEGLGVNIELDAEGVARCLRQAGIGFMFAPKFHPAMRYAGPVRREIGIRTIFNVLGPLTNPARAEYQVIGVANAGLAEKLANALSKMGIRRALVVHGSDGLDEISISASTLVFDVRAGATPQASTISPSDFGLSLAPREAIAGGSVEENVAMTKAILEGSDTGPRRDIVLLNAAAALVACERADSFGEALRQAQQAIDTGSANQRMQRMIEASNG.

Residues Gly-80, 83-84 (GD), Thr-88, 90-93 (NIST), 108-116 (KHGNRAMSS), and Ser-120 contribute to the 5-phospho-alpha-D-ribose 1-diphosphate site. Anthranilate is bound at residue Gly-80. Position 92 (Ser-92) interacts with Mg(2+). Asn-111 lines the anthranilate pocket. Residue Arg-166 participates in anthranilate binding. Residues Asp-225 and Glu-226 each coordinate Mg(2+).

Belongs to the anthranilate phosphoribosyltransferase family. Homodimer. Mg(2+) is required as a cofactor.

It carries out the reaction N-(5-phospho-beta-D-ribosyl)anthranilate + diphosphate = 5-phospho-alpha-D-ribose 1-diphosphate + anthranilate. The protein operates within amino-acid biosynthesis; L-tryptophan biosynthesis; L-tryptophan from chorismate: step 2/5. Catalyzes the transfer of the phosphoribosyl group of 5-phosphorylribose-1-pyrophosphate (PRPP) to anthranilate to yield N-(5'-phosphoribosyl)-anthranilate (PRA). The protein is Anthranilate phosphoribosyltransferase of Herpetosiphon aurantiacus (strain ATCC 23779 / DSM 785 / 114-95).